The following is a 215-amino-acid chain: Casparian strip membrane protein 3 (215 aa).

The interval 1 to 26 (MDSEKTGEAKITIQEPKAADPKGKGI) is disordered. At 1–55 (MDSEKTGEAKITIQEPKAADPKGKGIADAPPPPVVVTTAKAIQKLPRGGWKKGVA) the chain is on the cytoplasmic side. A helical membrane pass occupies residues 56–76 (IFDFVVRLCAIATGLAATGIM). Residues 77 to 101 (GTTEQTLPFFTQFFQFHAEYNDLPT) are Extracellular-facing. A helical transmembrane segment spans residues 102 to 122 (FMFFVFANGIASGYLILSLPF). Over 123 to 136 (SIVCIVRPLAIVPR) the chain is Cytoplasmic. A helical membrane pass occupies residues 137 to 157 (LLLIIFDTVVMALTIAAASAA). Residues 158–189 (AAIVYLAHNGNSNANWNAICQQFNDFCQQTST) lie on the Extracellular side of the membrane. The helical transmembrane segment at 190-210 (AVVASFITAAMLTFLIVLSAF) threads the bilayer. At 211–215 (ALKRN) the chain is on the cytoplasmic side.

Belongs to the Casparian strip membrane proteins (CASP) family. In terms of assembly, homodimer and heterodimers.

It is found in the cell membrane. Regulates membrane-cell wall junctions and localized cell wall deposition. Required for establishment of the Casparian strip membrane domain (CSD) and the subsequent formation of Casparian strips, a cell wall modification of the root endodermis that determines an apoplastic barrier between the intraorganismal apoplasm and the extraorganismal apoplasm and prevents lateral diffusion. In Ricinus communis (Castor bean), this protein is Casparian strip membrane protein 3.